A 108-amino-acid polypeptide reads, in one-letter code: AFAGILADADCAAAVKACEAADSFSYKAFFAKCGLSGKSADDIKKAFVFIDQDKSGFIEEDELKLFLQVFKAGARALTDAETKAFLKAGDSDGDGAIGVEEWVALVKA.

Ala1 is modified (N-acetylalanine). Cys11 and Cys33 are disulfide-bonded. EF-hand domains are found at residues 38-73 (KSADDIKKAFVFIDQDKSGFIEEDELKLFLQVFKAG) and 77-108 (LTDAETKAFLKAGDSDGDGAIGVEEWVALVKA). Positions 51, 53, 55, 57, 59, 62, 90, 92, 94, 96, and 101 each coordinate Ca(2+).

It belongs to the parvalbumin family.

In muscle, parvalbumin is thought to be involved in relaxation after contraction. It binds two calcium ions. The chain is Parvalbumin beta from Merlangius merlangus (Whiting).